The following is a 265-amino-acid chain: Hydroxyethylthiazole kinase (265 aa).

M41 is a substrate binding site. 2 residues coordinate ATP: R117 and S163. G190 provides a ligand contact to substrate.

This sequence belongs to the Thz kinase family. The cofactor is Mg(2+).

The catalysed reaction is 5-(2-hydroxyethyl)-4-methylthiazole + ATP = 4-methyl-5-(2-phosphooxyethyl)-thiazole + ADP + H(+). Its pathway is cofactor biosynthesis; thiamine diphosphate biosynthesis; 4-methyl-5-(2-phosphoethyl)-thiazole from 5-(2-hydroxyethyl)-4-methylthiazole: step 1/1. In terms of biological role, catalyzes the phosphorylation of the hydroxyl group of 4-methyl-5-beta-hydroxyethylthiazole (THZ). In Pediococcus pentosaceus (strain ATCC 25745 / CCUG 21536 / LMG 10740 / 183-1w), this protein is Hydroxyethylthiazole kinase.